We begin with the raw amino-acid sequence, 301 residues long: Putative glycosyltransferase MJ1113 (301 aa).

8 helical membrane-spanning segments follow: residues 2–22, 62–82, 95–115, 117–137, 140–160, 164–184, 191–211, and 280–300; these read GHYF…SAVL, FIPF…IIGI, LILL…NSYV, LIEI…TNML, FNGL…LVLF, YTTG…LLIF, VFPG…LAVV, and VTVL…ISLI.

The protein belongs to the glycosyltransferase 4 family.

The protein resides in the cell membrane. This chain is Putative glycosyltransferase MJ1113, found in Methanocaldococcus jannaschii (strain ATCC 43067 / DSM 2661 / JAL-1 / JCM 10045 / NBRC 100440) (Methanococcus jannaschii).